Reading from the N-terminus, the 121-residue chain is MNVVAIIMASQETCSGRAPRETPEWRRPACLVASILVRALEFSWLFSTCLLVAFDFARDCGLPPHSGKTWSDGKGPAALSFGKTNTKEATTNFYNRLDEKSGEEQAEKRKENSRSWIIYLL.

ATP is bound at residue 77-84; it reads AALSFGKT.

This is an uncharacterized protein from Saccharomyces cerevisiae (strain ATCC 204508 / S288c) (Baker's yeast).